Reading from the N-terminus, the 259-residue chain is NAP1-related protein 1 (259 aa).

A compositionally biased stretch (basic and acidic residues) spans 1–15; sequence MAAAEQKGKKPRTDG. The disordered stretch occupies residues 1 to 20; it reads MAAAEQKGKKPRTDGAEAEP. Residues 21–62 adopt a coiled-coil conformation; that stretch reads VDAALLQSIEKLQEIQDEIEKVNEEACDKVLELEQKYNEVRR. The tract at residues 228-259 is disordered; sequence ELLDDDDEVSDDDDEEEDDEDQGEGEEDGEEN.

It belongs to the nucleosome assembly protein (NAP) family.

The protein resides in the nucleus. It is found in the cytoplasm. Acts as a histone H2A/H2B chaperone in nucleosome assembly. The sequence is that of NAP1-related protein 1 from Oryza sativa subsp. indica (Rice).